A 445-amino-acid polypeptide reads, in one-letter code: Deoxyribodipyrimidine photo-lyase (445 aa).

Positions 20–148 (SYVVYWMQAS…QVESNVIVPV (129 aa)) constitute a Photolyase/cryptochrome alpha/beta domain. A DNA-binding site is contributed by Arg239.

The protein belongs to the DNA photolyase class-2 family. Requires FAD as cofactor. The cofactor is coenzyme F420-(gamma-Glu)n.

The enzyme catalyses cyclobutadipyrimidine (in DNA) = 2 pyrimidine residues (in DNA).. Functionally, involved in repair of UV radiation-induced DNA damage. Catalyzes the light-dependent monomerization (300-600 nm) of cyclobutyl pyrimidine dimers (in cis-syn configuration), which are formed between adjacent bases on the same DNA strand upon exposure to ultraviolet radiation. In Methanothermobacter thermautotrophicus (strain ATCC 29096 / DSM 1053 / JCM 10044 / NBRC 100330 / Delta H) (Methanobacterium thermoautotrophicum), this protein is Deoxyribodipyrimidine photo-lyase (phr).